A 22-amino-acid chain; its full sequence is Dioicin-1 (22 aa).

It is found in the secreted. Its subcellular location is the extracellular space. The protein resides in the golgi apparatus. It localises to the vacuole. The enzyme catalyses Endohydrolysis of the N-glycosidic bond at one specific adenosine on the 28S rRNA.. Functionally, nicks pBR322 dsDNA. Has adenine polynucleotide glycosidase activity on herring sperm ssDNA. The protein is Dioicin-1 of Phytolacca dioica (Bella sombra tree).